We begin with the raw amino-acid sequence, 122 residues long: Large ribosomal subunit protein bL17 (122 aa).

The protein belongs to the bacterial ribosomal protein bL17 family. As to quaternary structure, part of the 50S ribosomal subunit. Contacts protein L32.

The polypeptide is Large ribosomal subunit protein bL17 (Staphylococcus carnosus (strain TM300)).